A 1952-amino-acid chain; its full sequence is MQDFGQWLPQSQTTADLYFSSIPIPSQFDTSIETQTRTSAVVSSEKESANSFVPHNGTGLVERISNDAGLTEVVGSSAGPTECIDLNKTPARKPKKKKHRPKVLKDDKPSKTPKSATPIPSTEKVEKPSGKRKYVRKKTSPGQPPAEQAASSHCRSELKSVKRSLDFGGEVLQESTQSGSQVPVAEICTGPKRQSIPSTIQRDSQSQLACHVVSSTSSIHTSASQMVNAHLFPPDNMPNGVLLDLNNSTSQLQNEHAKFVDSPARLFGSRIRQTSGKNSLLEIYAGMSDRNVPDLNSSISQTHSMSTDFAQYLLSSSQASVRETQMANQMLNGHRMPENPITPSHCIERAALKEHLNHVPHAKAAVMNGQMPHSYRLAQNPILPPNHIEGYQVMENLSELVTTNDYLTASPFSQTGAANRQHNIGDSMHIHALDPRRESNASSGSWISLGVNFNQQNNGWASAGAADAASSHAPYFSEPHKRMRTAYLNNYPNGVVGHFSTSSTDLSNNENENVASAINSNVFTLADAQRLIAREKSRASQRMISFRSSKNDMVNRSEMVHQHGRPAPHGSACRESIEVPDKQFGLMTEELTQLPSMPNNPQREKYIPQTGSCQLQSLEHDMVKGHNLAGELHKQVTSPQVVIQSNFCVTPPDVLGRRTSGEHLRTLIAPTHASTCKDTLKALSCQLESSRDIIRPPVNPIGPSSADVPRTDNHQVKVSEETVTAKLPEKRKVGRPRKELKPGEKPKPRGRPRKGKVVGGELASKDSHTNPLQNESTSCSYGPYAGEASVGRAVKANRVGENISGAMVSLLDSLDIVIQKIKVLDINKSEDPVTAEPHGALVPYNGEFGPIVPFEGKVKRKRSRAKVDLDPVTALMWKLLMGPDMSDCAEGMDKDKEKWLNEERKIFQGRVDSFIARMHLVQGDRRFSPWKGSVVDSVVGVFLTQNVSDHLSSSAFMALAAKFPVKPEASEKPANVMFHTISENGDCSGLFGNSVKLQGEILVQEASNTAASFITTEDKEGSNSVELLGSSFGDGVDGAAGVYSNIYENLPARLHATRRPVVQTGNAVEAEDGSLEGVVSSENSTISSQNSSDYLFHMSDHMFSSMLLNFTAEDIGSRNMPKATRTTYTELLRMQELKNKSNETIESSEYHGVPVSCSNNIQVLNGIQNIGSKHQPLHSSISYHQTGQVHLPDIVHASDLEQSVYTGLNRVLDSNVTQTSYYPSPHPGIACNNETQKADSLSNMLYGIDRSDKTTSLSEPTPRIDNCFQPLSSEKMSFAREQSSSENYLSRNEAEAAFVKQHGTSNVQGDNTVRTEQNGGENSQSGYSQQDDNVGFQTATTSNLYSSNLCQNQKANSEVLHGVSSNLIENSKDDKKTSPKVPVDGSKAKRPRVGAGKKKTYDWDMLRKEVLYSHGNKERSQNAKDSIDWETIRQAEVKEISDTIRERGMNNMLAERIKDFLNRLVRDHGSIDLEWLRYVDSDKAKDYLLSIRGLGLKSVECVRLLTLHHMAFPVDTNVGRICVRLGWVPLQPLPESLQLHLLEMYPMLENIQKYLWPRLCKLDQRTLYELHYQMITFGKVFCTKSKPNCNACPMRAECKHFASAFASARLALPGPEEKSLVTSGTPIAAETFHQTYISSRPVVSQLEWNSNTCHHGMNNRQPIIEEPASPEPEHETEEMKECAIEDSFVDDPEEIPTIKLNFEEFTQNLKSYMQANNIEIEDADMSKALVAITPEVASIPTPKLKNVSRLRTEHQVYELPDSHPLLEGFNQREPDDPCPYLLSIWTPGETAQSTDAPKSVCNSQENGELCASNTCFSCNSIREAQAQKVRGTLLIPCRTAMRGSFPLNGTYFQVNEVFADHDSSRNPIDVPRSWIWNLPRRTVYFGTSIPTIFKGLTTEEIQHCFWRGFVCVRGFDRTSRAPRPLYARLHFPASKITRNKKSAGSAPGRDDE.

4 disordered regions span residues 72–157 (EVVG…CRSE), 693–778 (IIRP…ESTS), 1302–1334 (HGTS…DDNV), and 1367–1398 (LIEN…AGKK). 2 stretches are compositionally biased toward basic residues: residues 90–102 (PARK…HRPK) and 130–139 (GKRKYVRKKT). 2 stretches are compositionally biased toward basic and acidic residues: residues 709–720 (PRTDNHQVKVSE) and 727–747 (LPEK…EKPK). Positions 769–778 (TNPLQNESTS) are enriched in polar residues. Positions 1388–1398 (AKRPRVGAGKK) are enriched in basic residues. Residues Cys1582, Cys1589, Cys1592, and Cys1598 each contribute to the [4Fe-4S] cluster site.

It belongs to the DNA glycosylase family. DEMETER subfamily. The cofactor is [4Fe-4S] cluster. Expressed in roots, leaf blades, leaf sheaths, apical and lateral shoot meristems, inflorescence meristems, lodicules, pollen grains, ovules and seeds. Expressed in vascular tissues of roots and leaves, pollen grains, pericarp, aleurone, and starchy endosperm.

The protein localises to the nucleus. Its function is as follows. Bifunctional DNA glycosylase/lyase, which excises 5-methylcytosine (5-meC) and 5-hydroxymethylcytosine (5-hmeC), leaving an apyrimidinic (AP) site that is subsequently incised by the lyase activity. DNA demethylase that is indispensable in both male and female gametophyte development. Involved in the regulation of DNA methylation in the promoters of RISBZ1/BZIP58 and DOF3/RPBF, two transcription factors that functions synergistically to positively regulate genes that are key players in the development of aleurone layers. Active DNA demethylation carried out by ROS1A in rice endosperms may restrict the number of aleurone cell layers. This chain is Protein ROS1A, found in Oryza sativa subsp. japonica (Rice).